Here is a 350-residue protein sequence, read N- to C-terminus: Protein SGT1 homolog A (350 aa).

3 TPR repeats span residues 2–35 (AKEL…DPNC), 37–69 (EFFA…DPSL), and 71–103 (KAYL…TPSE). The 90-residue stretch at 149–238 (TAKYRHEYYQ…ADIITWASLE (90 aa)) folds into the CS domain. The 91-residue stretch at 260-350 (AYPSSKKVKD…DGMELKKWEI (91 aa)) folds into the SGS domain.

Belongs to the SGT1 family. In terms of assembly, interacts with RAR1. Forms a ternary complex with RAR1 and barley HSP90.

In terms of biological role, functions in R gene-mediated resistance, but participates in a lower extent than SGT1B to RPP5-mediated resistance. Not required for RPM1, RPS2, RPS4 and RPS5-mediated resistance. Probably required for SCF-mediated ubiquitination, by coupling HSP90 to SCF complex for ubiquitination of HSP90 client proteins. This chain is Protein SGT1 homolog A (SGT1A), found in Arabidopsis thaliana (Mouse-ear cress).